A 118-amino-acid polypeptide reads, in one-letter code: Small ribosomal subunit protein bS6 (118 aa).

The protein belongs to the bacterial ribosomal protein bS6 family.

Binds together with bS18 to 16S ribosomal RNA. The polypeptide is Small ribosomal subunit protein bS6 (Orientia tsutsugamushi (strain Ikeda) (Rickettsia tsutsugamushi)).